The sequence spans 207 residues: MPVSAPGPLPTVVEQSGRGDRAFDIYSRLLRERIIFLGTGVDDAVADALVAQMLFLEAEDPEKDIQIYINSPGGSVTAGLAIYDTMQQVAPDVVTICYGLAASMGAFLLSGGTKGKRLALPNARIMIHQPLGGAQGQAVDIEIQAKEILYLKETLNGLMAEHTGQPLDKISEDTDRDYFLSPAEAVEYGLIDRVVDSSGDGGIITES.

Catalysis depends on Ser103, which acts as the Nucleophile. The active site involves His128.

This sequence belongs to the peptidase S14 family. As to quaternary structure, fourteen ClpP subunits assemble into 2 heptameric rings which stack back to back to give a disk-like structure with a central cavity, resembling the structure of eukaryotic proteasomes.

The protein localises to the cytoplasm. It catalyses the reaction Hydrolysis of proteins to small peptides in the presence of ATP and magnesium. alpha-casein is the usual test substrate. In the absence of ATP, only oligopeptides shorter than five residues are hydrolyzed (such as succinyl-Leu-Tyr-|-NHMec, and Leu-Tyr-Leu-|-Tyr-Trp, in which cleavage of the -Tyr-|-Leu- and -Tyr-|-Trp bonds also occurs).. In terms of biological role, cleaves peptides in various proteins in a process that requires ATP hydrolysis. Has a chymotrypsin-like activity. Plays a major role in the degradation of misfolded proteins. This Synechococcus sp. (strain CC9605) protein is ATP-dependent Clp protease proteolytic subunit 1.